Consider the following 1038-residue polypeptide: Probable ubiquitin conjugation factor E4 (1038 aa).

2 disordered regions span residues 430-459 and 1010-1038; these read ANDAGRENGNESRLLQSKEATSSSSNASGQ and SHQSKKRTSGEDSSNKERIQTTNSDMLID. Low complexity predominate over residues 446-459; the sequence is SKEATSSSSNASGQ. The U-box domain maps to 940–1014; sequence EIPDEFLDPI…DEFVKSHQSK (75 aa). Basic and acidic residues predominate over residues 1017–1028; the sequence is TSGEDSSNKERI. Over residues 1029–1038 the composition is skewed to polar residues; sequence QTTNSDMLID.

This sequence belongs to the ubiquitin conjugation factor E4 family.

Its subcellular location is the cytoplasm. It is found in the nucleus. It carries out the reaction S-ubiquitinyl-[E2 ubiquitin-conjugating enzyme]-L-cysteine + [acceptor protein]-L-lysine = [E2 ubiquitin-conjugating enzyme]-L-cysteine + N(6)-ubiquitinyl-[acceptor protein]-L-lysine.. Its pathway is protein modification; protein ubiquitination. Its function is as follows. Ubiquitin-protein ligase that may function as an E3 ligase in conjunction with specific E1 and E2 ligases. May also function as an E4 ligase mediating the assembly of polyubiquitin chain assembly on substrates monoubiquitinated by another E3 ubiquitin ligase. In Arabidopsis thaliana (Mouse-ear cress), this protein is Probable ubiquitin conjugation factor E4 (PUB1).